The primary structure comprises 421 residues: Testin (421 aa).

In terms of domain architecture, PET spans 92–199; sequence MILTNPVAAK…GDVKLPREMD (108 aa). The tract at residues 133-164 is disordered; that stretch reads EKQPVAGSEGAQYRKKQLAKQLPAHDQDPSKC. Positions 155–164 are enriched in basic and acidic residues; the sequence is PAHDQDPSKC. LIM zinc-binding domains follow at residues 234 to 297, 299 to 359, and 362 to 421; these read YSCY…CDSE, PRCA…NHAV, and QGCH…KMMS.

Belongs to the prickle / espinas / testin family. As to quaternary structure, interacts via LIM domain 1 with ZYX. Interacts (via LIM domain 3) with ENAH and VASP. Interacts with ALKBH4, talin, actin, alpha-actinin, GRIP1 and PXN. Interacts (via LIM domain 2) with ACTL7A (via N-terminus). Heterodimer with ACTL7A; the heterodimer interacts with ENAH to form a heterotrimer.

The protein resides in the cytoplasm. It is found in the cell junction. The protein localises to the focal adhesion. Its function is as follows. Scaffold protein that may play a role in cell adhesion, cell spreading and in the reorganization of the actin cytoskeleton. Plays a role in the regulation of cell proliferation. May act as a tumor suppressor. In Neofelis nebulosa (Clouded leopard), this protein is Testin (TES).